The primary structure comprises 335 residues: Aspartate--ammonia ligase (335 aa).

It belongs to the class-II aminoacyl-tRNA synthetase family. AsnA subfamily.

It localises to the cytoplasm. It carries out the reaction L-aspartate + NH4(+) + ATP = L-asparagine + AMP + diphosphate + H(+). Its pathway is amino-acid biosynthesis; L-asparagine biosynthesis; L-asparagine from L-aspartate (ammonia route): step 1/1. This Pediococcus pentosaceus (strain ATCC 25745 / CCUG 21536 / LMG 10740 / 183-1w) protein is Aspartate--ammonia ligase.